A 186-amino-acid chain; its full sequence is RNA polymerase sigma factor NccH (186 aa).

The Polymerase core binding motif lies at 49–62 (DIVQDTFIAAWHAL). A DNA-binding region (H-T-H motif) is located at residues 152-171 (HPEAAMALGTSAKAVESRVA).

It belongs to the sigma-70 factor family. ECF subfamily.

Sigma factors are initiation factors that promote the attachment of RNA polymerase to specific initiation sites and are then released. This sigma factor regulates the genes for a membrane-located efflux system that confers resistance to nickel, cobalt and cadmium. In Alcaligenes xylosoxydans xylosoxydans (Achromobacter xylosoxidans), this protein is RNA polymerase sigma factor NccH (nccH).